Here is a 235-residue protein sequence, read N- to C-terminus: BPI fold-containing family A member 2 (235 aa).

A signal peptide spans 1-20 (MFQLGSLVVLCGLLIGNSES). Cysteines 161 and 204 form a disulfide.

Belongs to the BPI/LBP/Plunc superfamily. Plunc family. Predominates in the parotid glands, present in smaller amounts (1/10) in the submaxillary glands and in the sublingual glands, and at lower amount in the pancreas but undetectable in the liver. Found also in lacrimal gland.

Its subcellular location is the secreted. Its function is as follows. Has strong antibacterial activity against P.aeruginosa. This is BPI fold-containing family A member 2 (Bpifa2) from Mus musculus (Mouse).